Here is a 204-residue protein sequence, read N- to C-terminus: 3-isopropylmalate dehydratase small subunit (204 aa).

It belongs to the LeuD family. LeuD type 1 subfamily. Heterodimer of LeuC and LeuD.

The catalysed reaction is (2R,3S)-3-isopropylmalate = (2S)-2-isopropylmalate. The protein operates within amino-acid biosynthesis; L-leucine biosynthesis; L-leucine from 3-methyl-2-oxobutanoate: step 2/4. Its function is as follows. Catalyzes the isomerization between 2-isopropylmalate and 3-isopropylmalate, via the formation of 2-isopropylmaleate. This Roseiflexus sp. (strain RS-1) protein is 3-isopropylmalate dehydratase small subunit.